A 126-amino-acid chain; its full sequence is Large ribosomal subunit protein bL12 (126 aa).

The protein belongs to the bacterial ribosomal protein bL12 family. In terms of assembly, homodimer. Part of the ribosomal stalk of the 50S ribosomal subunit. Forms a multimeric L10(L12)X complex, where L10 forms an elongated spine to which 2 to 4 L12 dimers bind in a sequential fashion. Binds GTP-bound translation factors.

Forms part of the ribosomal stalk which helps the ribosome interact with GTP-bound translation factors. Is thus essential for accurate translation. The sequence is that of Large ribosomal subunit protein bL12 from Methylocella silvestris (strain DSM 15510 / CIP 108128 / LMG 27833 / NCIMB 13906 / BL2).